Here is a 79-residue protein sequence, read N- to C-terminus: Sec-independent protein translocase protein TatA (79 aa).

Residues 1–21 (MFSGISIWQLLILLAIVVLLF) form a helical membrane-spanning segment. Basic and acidic residues-rich tracts occupy residues 44–58 (MKDG…RLAD) and 66–79 (QDAE…KDKA). The disordered stretch occupies residues 44-79 (MKDGEDEQDHKRLADDDQPQNKQDAEQKAEQEKDKA).

This sequence belongs to the TatA/E family. As to quaternary structure, the Tat system comprises two distinct complexes: a TatABC complex, containing multiple copies of TatA, TatB and TatC subunits, and a separate TatA complex, containing only TatA subunits. Substrates initially bind to the TatABC complex, which probably triggers association of the separate TatA complex to form the active translocon.

The protein localises to the cell inner membrane. In terms of biological role, part of the twin-arginine translocation (Tat) system that transports large folded proteins containing a characteristic twin-arginine motif in their signal peptide across membranes. TatA could form the protein-conducting channel of the Tat system. This is Sec-independent protein translocase protein TatA from Alcanivorax borkumensis (strain ATCC 700651 / DSM 11573 / NCIMB 13689 / SK2).